The sequence spans 401 residues: Beta-ketoadipyl-CoA thiolase (401 aa).

C91 (acyl-thioester intermediate) is an active-site residue. Residues H357 and C387 each act as proton acceptor in the active site.

This sequence belongs to the thiolase-like superfamily. Thiolase family.

The catalysed reaction is succinyl-CoA + acetyl-CoA = 3-oxoadipyl-CoA + CoA. It participates in aromatic compound metabolism; beta-ketoadipate pathway; acetyl-CoA and succinyl-CoA from 3-oxoadipate: step 2/2. Its function is as follows. Catalyzes thiolytic cleavage of beta-ketoadipyl-CoA to succinyl-CoA and acetyl-CoA. This is Beta-ketoadipyl-CoA thiolase (pcaF) from Pseudomonas aeruginosa (strain ATCC 15692 / DSM 22644 / CIP 104116 / JCM 14847 / LMG 12228 / 1C / PRS 101 / PAO1).